A 66-amino-acid polypeptide reads, in one-letter code: MSTTSSSSTFSTRTASLSQSYTNSLKKEAAQKTLENWEYQAIHALQNNSSFPAIRRSMRKILADPS.

Residues 1–18 (MSTTSSSSTFSTRTASLS) show a composition bias toward low complexity. The interval 1-22 (MSTTSSSSTFSTRTASLSQSYT) is disordered.

This is an uncharacterized protein from Schizosaccharomyces pombe (strain 972 / ATCC 24843) (Fission yeast).